A 672-amino-acid chain; its full sequence is Acetoacetyl-CoA synthetase (672 aa).

It belongs to the ATP-dependent AMP-binding enzyme family.

Its subcellular location is the cytoplasm. The protein localises to the cytosol. The enzyme catalyses acetoacetate + ATP + CoA = acetoacetyl-CoA + AMP + diphosphate. In terms of biological role, converts acetoacetate to acetoacetyl-CoA in the cytosol. Ketone body-utilizing enzyme, responsible for the synthesis of cholesterol and fatty acids. The polypeptide is Acetoacetyl-CoA synthetase (Aacs) (Mus musculus (Mouse)).